A 333-amino-acid polypeptide reads, in one-letter code: MSKGSAWGRPVTAPACMEVQIGAVRYRRDGALLLAASSLSSRTWGGSIWVFKDPEGAPNESLCTAGVQTEAGVTDVAWVSEKGILVASDSGAVELWEILEKESLLVNKFAKYEHDDIVKTLSVFSDGTQAVSGGKDFSVKVWDLSQKAVLKSYNAHSSEVNCVAACPGKDTIFLSCGEDGRILLWDTRKPKPATRIDFCASDTIPTSVTWHPEKDDTFACGDETGNVSLVNIKNPDSAQTSAVHSQNITGLAYSYHSSPFLASISEDCTVAVLDADFSEVFRDLSHRDFVTGVAWSPLDHSKFTTVGWDHKVLHHHLPSEGRTENLIATKAED.

7 WD repeats span residues 16–59, 68–106, 113–152, 155–195, 199–240, 243–283, and 285–328; these read CMEV…GAPN, QTEA…SLLV, EHDD…VLKS, AHSS…PATR, CASD…SAQT, VHSQ…VFRD, and SHRD…NLIA.

In terms of assembly, heterotetramer; dimer of heterodimer with prmt5. Interacts with histone h2a and h4 and with nucleoplasmin. As to expression, detected in egg (at protein level).

It is found in the cytoplasm. The protein localises to the nucleus. Its function is as follows. Non-catalytic component of the 20S prmt5-containing methyltransferase complex, which modifies specific arginines to dimethylarginines in several spliceosomal Sm proteins and histones. Required for normal prmt5 methyltransferase activity. This is Methylosome protein WDR77 from Xenopus laevis (African clawed frog).